The primary structure comprises 214 residues: Histidine biosynthesis bifunctional protein HisIE (214 aa).

The segment at 1–114 is phosphoribosyl-AMP cyclohydrolase; that stretch reads MDLSAVRFDE…LEGEKDLGFV (114 aa). A phosphoribosyl-ATP pyrophosphohydrolase region spans residues 115–214; the sequence is VGQVYATIKE…RSPYDGSHGN (100 aa).

This sequence in the N-terminal section; belongs to the PRA-CH family. In the C-terminal section; belongs to the PRA-PH family.

It localises to the cytoplasm. The catalysed reaction is 1-(5-phospho-beta-D-ribosyl)-ATP + H2O = 1-(5-phospho-beta-D-ribosyl)-5'-AMP + diphosphate + H(+). It carries out the reaction 1-(5-phospho-beta-D-ribosyl)-5'-AMP + H2O = 1-(5-phospho-beta-D-ribosyl)-5-[(5-phospho-beta-D-ribosylamino)methylideneamino]imidazole-4-carboxamide. Its pathway is amino-acid biosynthesis; L-histidine biosynthesis; L-histidine from 5-phospho-alpha-D-ribose 1-diphosphate: step 2/9. It participates in amino-acid biosynthesis; L-histidine biosynthesis; L-histidine from 5-phospho-alpha-D-ribose 1-diphosphate: step 3/9. This chain is Histidine biosynthesis bifunctional protein HisIE, found in Thermus thermophilus (strain ATCC BAA-163 / DSM 7039 / HB27).